A 170-amino-acid chain; its full sequence is Adenine phosphoribosyltransferase (170 aa).

The protein belongs to the purine/pyrimidine phosphoribosyltransferase family. In terms of assembly, homodimer.

It is found in the cytoplasm. It carries out the reaction AMP + diphosphate = 5-phospho-alpha-D-ribose 1-diphosphate + adenine. It functions in the pathway purine metabolism; AMP biosynthesis via salvage pathway; AMP from adenine: step 1/1. In terms of biological role, catalyzes a salvage reaction resulting in the formation of AMP, that is energically less costly than de novo synthesis. The polypeptide is Adenine phosphoribosyltransferase (Mycoplasma mycoides subsp. mycoides SC (strain CCUG 32753 / NCTC 10114 / PG1)).